Reading from the N-terminus, the 498-residue chain is Calcitonin receptor (498 aa).

The first 29 residues, 1 to 29 (MRFTLTRWCLTLFIFLNRPLPVLPDSADG), serve as a signal peptide directing secretion. Residues 30 to 147 (AHTPTLEPEP…FTPDKLQNAY (118 aa)) lie on the Extracellular side of the membrane. Disulfide bonds link C56–C82, C73–C113, and C96–C135. 3 N-linked (GlcNAc...) asparagine glycosylation sites follow: N74, N126, and N131. Residues 148 to 170 (ILYYLAIVGHSLSILTLLISLGI) form a helical membrane-spanning segment. At 171 to 198 (FMFLRYFNLLAPFNALLYPTRSISCQRV) the chain is on the cytoplasmic side. Residues 199-219 (TLHKNMFLTYVLNSIIIIVHL) traverse the membrane as a helical segment. Residues 220-236 (VVIVPNGELVKRDPPIC) are Extracellular-facing. A disulfide bridge connects residues C236 and C306. The chain crosses the membrane as a helical span at residues 237–259 (KVLHFFHQYMMSCNYFWMLCEGV). The Cytoplasmic portion of the chain corresponds to 260 to 276 (YLHTLIVVSVFAEGQRL). The chain crosses the membrane as a helical span at residues 277–297 (WWYHVLGWGFPLIPTTAHAIT). Over 298-313 (RAVLFNDNCWLSVDTN) the chain is Extracellular. The chain crosses the membrane as a helical span at residues 314 to 337 (LLYIIHGPVMAALVVNFFFLLNIL). The Cytoplasmic portion of the chain corresponds to 338–357 (RVLVKKLKESQEAESHMYLK). A helical transmembrane segment spans residues 358–376 (AVRATLILVPLLGVQFVVL). Residues 377–384 (PWRPSTPL) lie on the Extracellular side of the membrane. Residues 385–411 (LGKIYDYVVHSLIHFQGFFVAIIYCFC) form a helical membrane-spanning segment. Residues 412 to 498 (NHEVQGALKR…MEVLEQETSA (87 aa)) are Cytoplasmic-facing.

It belongs to the G-protein coupled receptor 2 family. In terms of assembly, heterodimer of CALCR and RAMP1, RAMP2 or RAMP3; the receptor complexes function as AMYR1, AMYR2 and AMYR3 receptors, respectively, and respond to amylin/IAPP, calcitonin/CT and CGRP1 ligands. Interacts with GPRASP2.

It localises to the cell membrane. In terms of biological role, g protein-coupled receptor activated by ligand peptides amylin (IAPP), calcitonin (CT/CALCA) and calcitonin gene-related peptide type 1 (CGRP1/CALCA). CALCR interacts with receptor-activity-modifying proteins RAMP1, 2 and 3 to form receptor complexes AMYR1, 2 and 3, respectively. IAPP, CT and CGRP1 activate CALCR and AMYRs with distinct modes of receptor activation resulting in specific phenotypes. Ligand binding causes a conformation change that triggers signaling via guanine nucleotide-binding proteins (G proteins) and modulates the activity of downstream effectors. Activates cAMP-dependent pathway. The protein is Calcitonin receptor of Sus scrofa (Pig).